A 120-amino-acid chain; its full sequence is Large ribosomal subunit protein uL18 (120 aa).

The tract at residues 1 to 29 (MITKPNKNAGRKKRHAHVRRTLSGTPQRP) is disordered. The span at 9 to 20 (AGRKKRHAHVRR) shows a compositional bias: basic residues.

The protein belongs to the universal ribosomal protein uL18 family. Part of the 50S ribosomal subunit; part of the 5S rRNA/L5/L18/L25 subcomplex. Contacts the 5S and 23S rRNAs.

Functionally, this is one of the proteins that bind and probably mediate the attachment of the 5S RNA into the large ribosomal subunit, where it forms part of the central protuberance. This is Large ribosomal subunit protein uL18 from Shouchella clausii (strain KSM-K16) (Alkalihalobacillus clausii).